A 210-amino-acid polypeptide reads, in one-letter code: Leucyl/phenylalanyl-tRNA--protein transferase (210 aa).

It belongs to the L/F-transferase family.

The protein resides in the cytoplasm. The catalysed reaction is N-terminal L-lysyl-[protein] + L-leucyl-tRNA(Leu) = N-terminal L-leucyl-L-lysyl-[protein] + tRNA(Leu) + H(+). It carries out the reaction N-terminal L-arginyl-[protein] + L-leucyl-tRNA(Leu) = N-terminal L-leucyl-L-arginyl-[protein] + tRNA(Leu) + H(+). It catalyses the reaction L-phenylalanyl-tRNA(Phe) + an N-terminal L-alpha-aminoacyl-[protein] = an N-terminal L-phenylalanyl-L-alpha-aminoacyl-[protein] + tRNA(Phe). Functionally, functions in the N-end rule pathway of protein degradation where it conjugates Leu, Phe and, less efficiently, Met from aminoacyl-tRNAs to the N-termini of proteins containing an N-terminal arginine or lysine. In Roseobacter denitrificans (strain ATCC 33942 / OCh 114) (Erythrobacter sp. (strain OCh 114)), this protein is Leucyl/phenylalanyl-tRNA--protein transferase.